The sequence spans 246 residues: Probable transcriptional regulatory protein RD1_2018 (246 aa).

It belongs to the TACO1 family.

It is found in the cytoplasm. The chain is Probable transcriptional regulatory protein RD1_2018 from Roseobacter denitrificans (strain ATCC 33942 / OCh 114) (Erythrobacter sp. (strain OCh 114)).